Here is a 120-residue protein sequence, read N- to C-terminus: Large ribosomal subunit protein uL18 (120 aa).

This sequence belongs to the universal ribosomal protein uL18 family. In terms of assembly, part of the 50S ribosomal subunit; part of the 5S rRNA/L5/L18/L25 subcomplex. Contacts the 5S and 23S rRNAs.

Functionally, this is one of the proteins that bind and probably mediate the attachment of the 5S RNA into the large ribosomal subunit, where it forms part of the central protuberance. This is Large ribosomal subunit protein uL18 from Staphylococcus saprophyticus subsp. saprophyticus (strain ATCC 15305 / DSM 20229 / NCIMB 8711 / NCTC 7292 / S-41).